Consider the following 275-residue polypeptide: MALIKQKPTSAGARFVTRVRSEELYKGEPYAKLLEKQTRSSGRNNQGRVTTRHKGGGHKQFYRIVDFKRDKIDIPARVERIEYDPNRTAYIALVLYRDGERRYIVAPAGLSAGSEIVAGEFAAIKVGNSLPLRNIPVGTVVHCVEGKPGKGAQYARSAGTSIQLVAKEGEYATLRMRSGEMRKVLADCKATIGEVSNNEHNLVSLGKAGASRWRGVRPTVRGVAMNPVDHPHGGGEGRTSGGRHPVSPWGIPTKGYKTRNNKRTDGLIIRRRKTR.

Disordered stretches follow at residues 35-55 (EKQT…RHKG) and 223-260 (VAMN…KTRN). Polar residues predominate over residues 39–49 (RSSGRNNQGRV).

Belongs to the universal ribosomal protein uL2 family. In terms of assembly, part of the 50S ribosomal subunit. Forms a bridge to the 30S subunit in the 70S ribosome.

In terms of biological role, one of the primary rRNA binding proteins. Required for association of the 30S and 50S subunits to form the 70S ribosome, for tRNA binding and peptide bond formation. It has been suggested to have peptidyltransferase activity; this is somewhat controversial. Makes several contacts with the 16S rRNA in the 70S ribosome. In Methylococcus capsulatus (strain ATCC 33009 / NCIMB 11132 / Bath), this protein is Large ribosomal subunit protein uL2.